The chain runs to 188 residues: MSIKSDKWIRRMAEQQGMIAPFAPELVRHNGTGKIVSYGTSSYGYDVRCANEFKIFTNINSTIVDPKDFDARNFVDFVGDVCIIPPNSFALARTVEYFRIPRNVLTVCLGKSTYARCGIIVNVTPLEPEWEGHVTLEFSNTTPLPAKIYANEGIAQMLFFEADEVCETSYKDRGGKYLGQTGVTLPKI.

DCTP is bound by residues 111-116, 135-137, Gln-156, Tyr-170, and Gln-180; these read KSTYAR and TLE. Glu-137 (proton donor/acceptor) is an active-site residue.

The protein belongs to the dCTP deaminase family. Homotrimer.

It carries out the reaction dCTP + H2O + H(+) = dUTP + NH4(+). It functions in the pathway pyrimidine metabolism; dUMP biosynthesis; dUMP from dCTP (dUTP route): step 1/2. Functionally, catalyzes the deamination of dCTP to dUTP. The protein is dCTP deaminase of Aromatoleum aromaticum (strain DSM 19018 / LMG 30748 / EbN1) (Azoarcus sp. (strain EbN1)).